The primary structure comprises 298 residues: MDLMSALSLGELALSFSRVPLFPVFDLSYFIVSIIYLKYEPGAVELSRRHPVASWLCAMLHCFGSYILADLLLGEPIIDYFSNSSSILLASGVWYLIFFCPLDLFYKCVCFLPVKLIFVAMKEVVRVRKIAVGIHHAHHHYHHGWFIMIATGWVKGSGVALLSNVEQLLRGVWKPETNEILHMSFPTKASLYGAILFTLQQTRWLPVSKASLIFVFTMFMVSCKVFLTATHSHSSPFDILEGYICPVLFGATWGGDHHHDNHGAPHGMGLGTQHSGLPAKAKEELGEGSRKKKTKKAD.

Residues 1–18 (MDLMSALSLGELALSFSR) lie on the Lumenal side of the membrane. Residues 19–39 (VPLFPVFDLSYFIVSIIYLKY) traverse the membrane as a helical segment. Residues 40–51 (EPGAVELSRRHP) lie on the Cytoplasmic side of the membrane. Residues 52 to 72 (VASWLCAMLHCFGSYILADLL) form a helical membrane-spanning segment. At 73–85 (LGEPIIDYFSNSS) the chain is on the lumenal side. Gly74 contributes to the Ca(2+) binding site. The helical transmembrane segment at 86 to 106 (SILLASGVWYLIFFCPLDLFY) threads the bilayer. The Cytoplasmic segment spans residues 107 to 144 (KCVCFLPVKLIFVAMKEVVRVRKIAVGIHHAHHHYHHG). Residues Lys122 and Arg126 each coordinate a 1,2-diacyl-sn-glycero-3-phospho-(1D-myo-inositol-4,5-bisphosphate). A helical transmembrane segment spans residues 145–165 (WFIMIATGWVKGSGVALLSNV). Over 166 to 178 (EQLLRGVWKPETN) the chain is Lumenal. The helical transmembrane segment at 179–199 (EILHMSFPTKASLYGAILFTL) threads the bilayer. Residues 200–209 (QQTRWLPVSK) lie on the Cytoplasmic side of the membrane. The chain crosses the membrane as a helical span at residues 210–230 (ASLIFVFTMFMVSCKVFLTAT). The Lumenal segment spans residues 231–234 (HSHS). Residues 235 to 255 (SPFDILEGYICPVLFGATWGG) traverse the membrane as a helical segment. At 256–298 (DHHHDNHGAPHGMGLGTQHSGLPAKAKEELGEGSRKKKTKKAD) the chain is on the cytoplasmic side. Residues 260-298 (DNHGAPHGMGLGTQHSGLPAKAKEELGEGSRKKKTKKAD) form a disordered region. The span at 280–289 (KAKEELGEGS) shows a compositional bias: basic and acidic residues.

Belongs to the TMEM38 family. As to quaternary structure, homotrimer; conformation seems to be controled by binding to diacylglycerol (DAG). As to expression, expressed at high levels in heart and striated muscle. Also detected in brain, lung and kidney.

It localises to the sarcoplasmic reticulum membrane. The protein localises to the nucleus membrane. It carries out the reaction K(+)(in) = K(+)(out). Its activity is regulated as follows. Channel activity is activated by a change of voltage within the sarcoplasmic reticulum lumen and blocked by luminal high Ca(2+) levels. Intracellular monovalent cation channel required for maintenance of rapid intracellular calcium release. Acts as a potassium counter-ion channel that functions in synchronization with calcium release from intracellular stores. Opened by a change of voltage within the sarcoplasmic reticulum lumen. This is Trimeric intracellular cation channel type A (Tmem38a) from Mus musculus (Mouse).